We begin with the raw amino-acid sequence, 706 residues long: Elongation factor G (706 aa).

Residues glutamate 8 to leucine 295 enclose the tr-type G domain. Residues alanine 17 to threonine 24, aspartate 92 to histidine 96, and asparagine 146 to aspartate 149 contribute to the GTP site.

This sequence belongs to the TRAFAC class translation factor GTPase superfamily. Classic translation factor GTPase family. EF-G/EF-2 subfamily.

The protein localises to the cytoplasm. In terms of biological role, catalyzes the GTP-dependent ribosomal translocation step during translation elongation. During this step, the ribosome changes from the pre-translocational (PRE) to the post-translocational (POST) state as the newly formed A-site-bound peptidyl-tRNA and P-site-bound deacylated tRNA move to the P and E sites, respectively. Catalyzes the coordinated movement of the two tRNA molecules, the mRNA and conformational changes in the ribosome. The polypeptide is Elongation factor G (Ruegeria sp. (strain TM1040) (Silicibacter sp.)).